The chain runs to 296 residues: Probable 2-(5''-triphosphoribosyl)-3'-dephosphocoenzyme-A synthase (296 aa).

This sequence belongs to the CitG/MdcB family.

The catalysed reaction is 3'-dephospho-CoA + ATP = 2'-(5''-triphospho-alpha-D-ribosyl)-3'-dephospho-CoA + adenine. The polypeptide is Probable 2-(5''-triphosphoribosyl)-3'-dephosphocoenzyme-A synthase (Streptococcus mutans serotype c (strain ATCC 700610 / UA159)).